The sequence spans 442 residues: Divalent metal cation transporter MntH (442 aa).

11 helical membrane passes run 29–49 (MLAY…PGNW), 62–82 (TLLT…SLCV), 106–126 (FCLW…ELLG), 135–155 (FVIP…VLLF), 166–186 (ALVI…ILFS), 209–229 (MLYI…LYLH), 258–278 (FALS…AATF), 295–315 (LLSP…ALLA), 347–367 (LITR…FGEN), 372–392 (LIVL…IPLV), and 413–433 (LAWL…LQSL).

Belongs to the NRAMP family.

Its subcellular location is the cell inner membrane. Functionally, h(+)-stimulated, divalent metal cation uptake system. This Nostoc sp. (strain PCC 7120 / SAG 25.82 / UTEX 2576) protein is Divalent metal cation transporter MntH.